Reading from the N-terminus, the 374-residue chain is Translocating chain-associated membrane protein 1 (374 aa).

Residues 1-32 (MAIRKKSNKNPPVLSHEFVLQNHADIVSCLAM) are Cytoplasmic-facing. Residues 33 to 53 (LFLLGLMFEITAKGAIIFVAL) traverse the membrane as a helical segment. The Lumenal segment spans residues 54–81 (QYNVTRPATEEQAAESASLYYYGIKDLA). An N-linked (GlcNAc...) asparagine glycan is attached at asparagine 56. A helical transmembrane segment spans residues 82-102 (TVFFYMLVAIIVHAIIQEYVL). The Cytoplasmic portion of the chain corresponds to 103–121 (DKINRRMHFSKTKHSKFNE). In terms of domain architecture, TLC spans 117–326 (SKFNESGQLS…NFQLRRWREH (210 aa)). The chain crosses the membrane as a helical span at residues 122 to 142 (SGQLSAFYLFACVWGTFILVS). The Lumenal portion of the chain corresponds to 143 to 159 (ENYISDPTILWRAYPHN). A helical membrane pass occupies residues 160–180 (LMTFQMKFFYISQLAYWLHAF). Residues 181–192 (PELYFQKTKKED) lie on the Cytoplasmic side of the membrane. The chain crosses the membrane as a helical span at residues 193–213 (IPRQLVYIGLYLFHIAGAYLL). A topological domain (lumenal) is located at residue asparagine 214. Residues 215–235 (LNHLGLVLLVLHYFVEFLFHI) form a helical membrane-spanning segment. Over 236 to 251 (SRLFYFSDEKYQKGFS) the chain is Cytoplasmic. The helical transmembrane segment at 252 to 272 (LWAVLFVLGRLLTLILSVLTV) threads the bilayer. Topologically, residues 273–297 (GFGLARAENQKLDFSTGNFNVLAVR) are lumenal. The chain crosses the membrane as a helical span at residues 298–318 (IAVLASICITQAFMMWKFINF). Topologically, residues 319–374 (QLRRWREHSAFQAPPVKRKPAVTKGRSSRKGTENGVNGTVTSNGADSPRSRKEKSS) are cytoplasmic. Residues 333 to 374 (PVKRKPAVTKGRSSRKGTENGVNGTVTSNGADSPRSRKEKSS) are disordered. A compositionally biased stretch (basic residues) spans 334 to 347 (VKRKPAVTKGRSSR). Polar residues predominate over residues 352–363 (NGVNGTVTSNGA). Serine 365 is subject to Phosphoserine.

This sequence belongs to the TRAM family. Interacts with SEC61B. May interact with Derlin-1/DERL1. In terms of processing, N-glycosylated.

The protein localises to the endoplasmic reticulum membrane. Functionally, involved in the translocation of nascent protein chains into or through the endoplasmic reticulum (ER) membrane by facilitating the proper chain positioning at the SEC61 channel. Regulates the exposure of nascent secretory protein chain to the cytosol during translocation into the ER. May affect the phospholipid bilayer in the vicinity of the lateral gate of the SEC61 channel, thereby facilitating ER protein transport. Intimately associates with transmembrane (TM) domain of nascent membrane proteins during the entire integration process into the ER membrane. Associates with the second TM domain of G-protein-coupled receptor opsin/OPSD nascent chain in the ER membrane, which may facilitate its integration into the membrane. Under conditions of ER stress, participates in the disposal of misfolded ER membrane proteins during the unfolded protein response (UPR), an integrated stress response (ISR) pathway, by selectively retrotranslocating misfolded ER-membrane proteins from the ER into the cytosol where they are ubiquitinated and degraded by the proteasome. The sequence is that of Translocating chain-associated membrane protein 1 from Rattus norvegicus (Rat).